Reading from the N-terminus, the 68-residue chain is Alpha-conotoxin PIVA (68 aa).

Positions 1-16 are cleaved as a signal peptide; the sequence is MFTVFLLVVLATTVVS. Positions 17–41 are excised as a propeptide; that stretch reads FTSDRASDDRNTNDKASRLLSHVVR. Cystine bridges form between C43/C57, C44/C52, and C55/C64. 2 positions are modified to 4-hydroxyproline; partial: P48 and P54. P61 bears the 4-hydroxyproline mark. Q66 carries the glutamine amide modification.

Belongs to the conotoxin A superfamily. Expressed by the venom duct.

The protein localises to the secreted. Its function is as follows. Alpha-conotoxins act on postsynaptic membranes, they bind to the nicotinic acetylcholine receptors (nAChR) and thus inhibit them. This toxin has higher affinity for the adult subtype (alpha-1-beta-1-gamma-delta (CHRNA1-CHRNB1-CHRNG-CHRND) subunits) (IC(50)=2.3 nM) of the receptor than for the fetal subtype (alpha-1-beta-1-epsilon-delta (CHRNA1-CHRNB1-CHRND-CHRNE) subunits) (IC(50)=22 nM). The sequence is that of Alpha-conotoxin PIVA from Conus purpurascens (Purple cone).